We begin with the raw amino-acid sequence, 134 residues long: MKDWLDEIHWNADGLVPAIAQDHETGRVLMMAWMNREALALTASENRAIYWSRSRGKLWRKGEESGHVQKLHELRLDCDADVVILMVEQVGGIACHTGRESCFYRVFENGAWKTVDPVLKDPDAIYEHAGHHHE.

Aspartate 77 contacts Mg(2+). A Zn(2+)-binding site is contributed by cysteine 78. Residues aspartate 79 and aspartate 81 each contribute to the Mg(2+) site. Cysteine 95 and cysteine 102 together coordinate Zn(2+).

This sequence belongs to the PRA-CH family. Homodimer. Mg(2+) serves as cofactor. Zn(2+) is required as a cofactor.

It localises to the cytoplasm. The catalysed reaction is 1-(5-phospho-beta-D-ribosyl)-5'-AMP + H2O = 1-(5-phospho-beta-D-ribosyl)-5-[(5-phospho-beta-D-ribosylamino)methylideneamino]imidazole-4-carboxamide. It functions in the pathway amino-acid biosynthesis; L-histidine biosynthesis; L-histidine from 5-phospho-alpha-D-ribose 1-diphosphate: step 3/9. Catalyzes the hydrolysis of the adenine ring of phosphoribosyl-AMP. The polypeptide is Phosphoribosyl-AMP cyclohydrolase (Pseudomonas aeruginosa (strain LESB58)).